A 701-amino-acid polypeptide reads, in one-letter code: Glycine--tRNA ligase beta subunit (701 aa).

The protein belongs to the class-II aminoacyl-tRNA synthetase family. As to quaternary structure, tetramer of two alpha and two beta subunits.

It localises to the cytoplasm. It carries out the reaction tRNA(Gly) + glycine + ATP = glycyl-tRNA(Gly) + AMP + diphosphate. The sequence is that of Glycine--tRNA ligase beta subunit from Anaeromyxobacter dehalogenans (strain 2CP-C).